A 356-amino-acid polypeptide reads, in one-letter code: Peptide chain release factor 1 (356 aa).

An N5-methylglutamine modification is found at Q233.

The protein belongs to the prokaryotic/mitochondrial release factor family. In terms of processing, methylated by PrmC. Methylation increases the termination efficiency of RF1.

It localises to the cytoplasm. Peptide chain release factor 1 directs the termination of translation in response to the peptide chain termination codons UAG and UAA. The protein is Peptide chain release factor 1 of Shouchella clausii (strain KSM-K16) (Alkalihalobacillus clausii).